A 346-amino-acid chain; its full sequence is DNA-directed RNA polymerase subunit alpha (346 aa).

The segment at 1–243 (MTMNNPNLTM…EQLSIWVNFE (243 aa)) is alpha N-terminal domain (alpha-NTD). The tract at residues 260–346 (LNENLFRSVE…ERWKAQQAQA (87 aa)) is alpha C-terminal domain (alpha-CTD).

It belongs to the RNA polymerase alpha chain family. As to quaternary structure, homodimer. The RNAP catalytic core consists of 2 alpha, 1 beta, 1 beta' and 1 omega subunit. When a sigma factor is associated with the core the holoenzyme is formed, which can initiate transcription.

It carries out the reaction RNA(n) + a ribonucleoside 5'-triphosphate = RNA(n+1) + diphosphate. Its function is as follows. DNA-dependent RNA polymerase catalyzes the transcription of DNA into RNA using the four ribonucleoside triphosphates as substrates. The sequence is that of DNA-directed RNA polymerase subunit alpha from Sorangium cellulosum (strain So ce56) (Polyangium cellulosum (strain So ce56)).